We begin with the raw amino-acid sequence, 121 residues long: uncharacterized protein (121 aa).

This is an uncharacterized protein from Saccharomyces cerevisiae (strain ATCC 204508 / S288c) (Baker's yeast).